A 118-amino-acid polypeptide reads, in one-letter code: Large ribosomal subunit protein bL19 (118 aa).

The protein belongs to the bacterial ribosomal protein bL19 family.

This protein is located at the 30S-50S ribosomal subunit interface and may play a role in the structure and function of the aminoacyl-tRNA binding site. This Campylobacter curvus (strain 525.92) protein is Large ribosomal subunit protein bL19.